A 148-amino-acid chain; its full sequence is MSQLKRILLLNGPNLNMLGVREPTHYGSLSLKTIEQDLQSLAQQYAVELSCFQANSEEKLIEKIHQSFQQIDFIIINPAAFTHTSVALRDALLAVAIPFVEVHLSNVHKREPFRHHSYFSDVAEGVICGLGAKGYEFALQFAVSFLKK.

The Proton acceptor role is filled by Tyr-26. Substrate-binding residues include Asn-77, His-83, and Asp-90. The active-site Proton donor is the His-103. Substrate-binding positions include 104–105 and Arg-114; that span reads LS.

It belongs to the type-II 3-dehydroquinase family. Homododecamer.

It carries out the reaction 3-dehydroquinate = 3-dehydroshikimate + H2O. It functions in the pathway metabolic intermediate biosynthesis; chorismate biosynthesis; chorismate from D-erythrose 4-phosphate and phosphoenolpyruvate: step 3/7. Its function is as follows. Catalyzes a trans-dehydration via an enolate intermediate. This Pasteurella multocida (strain Pm70) protein is 3-dehydroquinate dehydratase (aroQ).